A 133-amino-acid chain; its full sequence is Large-conductance mechanosensitive channel (133 aa).

The next 2 membrane-spanning stretches (helical) occupy residues 14–34 (VVDLAVGVVIGAAFGKIVSSL) and 67–87 (GNFIQTIFDFLIIAAAIFMFV).

The protein belongs to the MscL family. Homopentamer.

It is found in the cell membrane. Its function is as follows. Channel that opens in response to stretch forces in the membrane lipid bilayer. May participate in the regulation of osmotic pressure changes within the cell. The polypeptide is Large-conductance mechanosensitive channel (Bacillus cereus (strain AH187)).